We begin with the raw amino-acid sequence, 447 residues long: Argininosuccinate synthase (447 aa).

ATP-binding positions include 17–25 (AFSGGLDTS) and Ala-43. Tyr-99 contributes to the L-citrulline binding site. ATP-binding residues include Gly-129 and Thr-131. L-aspartate contacts are provided by Thr-131, Asn-135, and Asp-136. Asn-135 is an L-citrulline binding site. Asp-136 is an ATP binding site. Residues Arg-139 and Ser-192 each coordinate L-citrulline. Asp-194 is an ATP binding site. L-citrulline is bound by residues Thr-201, Glu-203, and Glu-280.

This sequence belongs to the argininosuccinate synthase family. Type 2 subfamily. Homotetramer.

Its subcellular location is the cytoplasm. The enzyme catalyses L-citrulline + L-aspartate + ATP = 2-(N(omega)-L-arginino)succinate + AMP + diphosphate + H(+). It functions in the pathway amino-acid biosynthesis; L-arginine biosynthesis; L-arginine from L-ornithine and carbamoyl phosphate: step 2/3. The protein is Argininosuccinate synthase of Klebsiella pneumoniae (strain 342).